The primary structure comprises 339 residues: Phenylalanine--tRNA ligase alpha subunit (339 aa).

Glu250 is a binding site for Mg(2+).

This sequence belongs to the class-II aminoacyl-tRNA synthetase family. Phe-tRNA synthetase alpha subunit type 1 subfamily. As to quaternary structure, tetramer of two alpha and two beta subunits. It depends on Mg(2+) as a cofactor.

It localises to the cytoplasm. It carries out the reaction tRNA(Phe) + L-phenylalanine + ATP = L-phenylalanyl-tRNA(Phe) + AMP + diphosphate + H(+). This chain is Phenylalanine--tRNA ligase alpha subunit, found in Christiangramia forsetii (strain DSM 17595 / CGMCC 1.15422 / KT0803) (Gramella forsetii).